A 275-amino-acid chain; its full sequence is Rhamnulose-1-phosphate aldolase (275 aa).

Glu117 is a catalytic residue. His141, His143, and His212 together coordinate Zn(2+).

This sequence belongs to the aldolase class II family. RhaD subfamily. In terms of assembly, homotetramer. Zn(2+) is required as a cofactor.

It is found in the cytoplasm. It carries out the reaction L-rhamnulose 1-phosphate = (S)-lactaldehyde + dihydroxyacetone phosphate. It participates in carbohydrate degradation; L-rhamnose degradation; glycerone phosphate from L-rhamnose: step 3/3. Its function is as follows. Catalyzes the reversible cleavage of L-rhamnulose-1-phosphate to dihydroxyacetone phosphate (DHAP) and L-lactaldehyde. This is Rhamnulose-1-phosphate aldolase from Salmonella dublin (strain CT_02021853).